Here is a 253-residue protein sequence, read N- to C-terminus: Small ribosomal subunit protein uS2 (253 aa).

This sequence belongs to the universal ribosomal protein uS2 family.

This is Small ribosomal subunit protein uS2 from Chlorobium luteolum (strain DSM 273 / BCRC 81028 / 2530) (Pelodictyon luteolum).